Here is a 157-residue protein sequence, read N- to C-terminus: MRCPYCSSEDSQVKDSRPAEDGNAIRRRRICPDCGGRFTTFERVQLRELMIIKKTGRKVPFDRDKLLRSFEIALRKRPVDRDRIERAVSGIVRRLESSGETEIPSEEIGLQVLEALKSLDDVAFVRYASVYRDFSHAEDFEKVIAEISAKIARDPSE.

Residues 1–21 form a disordered region; that stretch reads MRCPYCSSEDSQVKDSRPAED. A zinc finger lies at 3-34; the sequence is CPYCSSEDSQVKDSRPAEDGNAIRRRRICPDC. Residues 11–21 are compositionally biased toward basic and acidic residues; sequence SQVKDSRPAED. The 91-residue stretch at 49–139 folds into the ATP-cone domain; the sequence is LMIIKKTGRK…VYRDFSHAED (91 aa).

The protein belongs to the NrdR family. Zn(2+) is required as a cofactor.

Its function is as follows. Negatively regulates transcription of bacterial ribonucleotide reductase nrd genes and operons by binding to NrdR-boxes. The chain is Transcriptional repressor NrdR from Sinorhizobium fredii (strain NBRC 101917 / NGR234).